Reading from the N-terminus, the 106-residue chain is Replication restart protein PriB (106 aa).

The SSB domain maps to 4–103 (TNRLVLSGTV…LHAEQIEFID (100 aa)).

The protein belongs to the PriB family. In terms of assembly, homodimer. Interacts with PriA and DnaT. Component of the replication restart primosome. Primosome assembly occurs via a 'hand-off' mechanism. PriA binds to replication forks, subsequently PriB then DnaT bind; DnaT then displaces ssDNA to generate the helicase loading substrate.

In terms of biological role, involved in the restart of stalled replication forks, which reloads the replicative helicase on sites other than the origin of replication; the PriA-PriB pathway is the major replication restart pathway. During primosome assembly it facilitates complex formation between PriA and DnaT on DNA; stabilizes PriA on DNA. Stimulates the DNA unwinding activity of PriA helicase. This chain is Replication restart protein PriB, found in Yersinia pestis.